A 487-amino-acid chain; its full sequence is Calcium-dependent mitochondrial ATP-magnesium/phosphate carrier protein 2 (487 aa).

Topologically, residues 1 to 211 are mitochondrial intermembrane; sequence MEATKSSKQN…ISKHIKRSNY (211 aa). 4 EF-hand domains span residues 36-71, 72-107, 108-138, and 139-174; these read ERDL…LQIP, SGYK…KELE, LYRI…AGIE, and IKDE…YPHE. Ca(2+)-binding residues include D85, N87, D89, R91, and E96. 4 residues coordinate Ca(2+): D152, D154, D156, and E163. Solcar repeat units lie at residues 206–289, 301–389, and 400–483; these read IKRS…FKNA, IGTT…LKDL, and PGPL…MKKS. The helical transmembrane segment at 212-229 threads the bilayer; sequence FIAGGIAGAASRTATAPL. Topologically, residues 230–263 are mitochondrial matrix; it reads DRLKVLLQIQKTDARIREAIKLIWKQGGVRGFFR. The chain crosses the membrane as a helical span at residues 264-283; the sequence is GNGLNIVKVAPESAIKFYAY. Residues 284 to 310 are Mitochondrial intermembrane-facing; that stretch reads ELFKNAIGENMGEDKADIGTTVRLFAG. A helical membrane pass occupies residues 311-324; the sequence is GMAGAVAQASIYPL. Over 325–363 the chain is Mitochondrial matrix; the sequence is DLVKTRLQTYTSQAGVAVPRLGTLTKDILVHEGPRAFYK. The chain crosses the membrane as a helical span at residues 364 to 383; the sequence is GLFPSLLGIIPYAGIDLAAY. The Mitochondrial intermembrane segment spans residues 384 to 405; sequence ETLKDLSRTYILQDAEPGPLVQ. A helical membrane pass occupies residues 406 to 423; it reads LGCGTISGALGATCVYPL. At 424–457 the chain is on the mitochondrial matrix side; it reads QVVRTRMQAERARTSMSGVFRRTISEEGYRALYK. Residues 458 to 477 traverse the membrane as a helical segment; that stretch reads GLLPNLLKVVPAASITYMVY. Residues 478–487 lie on the Mitochondrial intermembrane side of the membrane; it reads EAMKKSLELD.

This sequence belongs to the mitochondrial carrier (TC 2.A.29) family. Expressed in flowers, leaves, stems, roots and seedlings, mostly in aerial parts.

The protein resides in the mitochondrion inner membrane. Its activity is regulated as follows. Counter-exchange transport activity is saturable and inhibited by pyridoxal-5'-phosphate, EDTA and EGTA. Activated by calcium Ca(2+) and manganese Mn(2+) ions, and slightly by iron Fe(2+) and zinc Zn(2+) ions. Repressed by copper ions Cu(2+) and slightly by magnesium Mg(2+) ions. Magnesium Mg(2+) ions promotes slightly ATP uptake, ATP-Mg(2+) being exchanged with ATP(4-). In terms of biological role, calcium-dependent mitochondrial carrier protein that catalyzes the import of ATP co-transported with metal divalent cations across the mitochondrial inner membrane in exchange for phosphate (Pi). Can transport phosphate, AMP, ADP, ATP, adenosine 5'-phosphosulfate, sulfate and thiosulfate, and, to a lesser extent, other nucleotides. Binds calcium ions Ca(2+). Also mediates calcium uptake. The protein is Calcium-dependent mitochondrial ATP-magnesium/phosphate carrier protein 2 of Arabidopsis thaliana (Mouse-ear cress).